We begin with the raw amino-acid sequence, 388 residues long: Riboflavin biosynthesis protein RibBA (388 aa).

Positions methionine 1–lysine 186 are DHBP synthase. D-ribulose 5-phosphate contacts are provided by residues arginine 21–glutamate 22, aspartate 26, arginine 125–threonine 129, and glutamate 149. Glutamate 22 contributes to the Mg(2+) binding site. Mg(2+) is bound at residue histidine 128. Residues arginine 187–serine 388 are GTP cyclohydrolase II. Arginine 235 to glutamate 239 contacts GTP. 3 residues coordinate Zn(2+): cysteine 240, cysteine 251, and cysteine 253. Residues glutamine 256, glutamate 277–arginine 279, and threonine 299 contribute to the GTP site. The active-site Proton acceptor; for GTP cyclohydrolase activity is the aspartate 311. Catalysis depends on arginine 313, which acts as the Nucleophile; for GTP cyclohydrolase activity. 2 residues coordinate GTP: threonine 334 and lysine 339.

In the N-terminal section; belongs to the DHBP synthase family. The protein in the C-terminal section; belongs to the GTP cyclohydrolase II family. Mg(2+) serves as cofactor. Mn(2+) is required as a cofactor. Requires Zn(2+) as cofactor.

The catalysed reaction is D-ribulose 5-phosphate = (2S)-2-hydroxy-3-oxobutyl phosphate + formate + H(+). The enzyme catalyses GTP + 4 H2O = 2,5-diamino-6-hydroxy-4-(5-phosphoribosylamino)-pyrimidine + formate + 2 phosphate + 3 H(+). It participates in cofactor biosynthesis; riboflavin biosynthesis; 2-hydroxy-3-oxobutyl phosphate from D-ribulose 5-phosphate: step 1/1. Its pathway is cofactor biosynthesis; riboflavin biosynthesis; 5-amino-6-(D-ribitylamino)uracil from GTP: step 1/4. In terms of biological role, catalyzes the conversion of D-ribulose 5-phosphate to formate and 3,4-dihydroxy-2-butanone 4-phosphate. Catalyzes the conversion of GTP to 2,5-diamino-6-ribosylamino-4(3H)-pyrimidinone 5'-phosphate (DARP), formate and pyrophosphate. The chain is Riboflavin biosynthesis protein RibBA from Thermotoga maritima (strain ATCC 43589 / DSM 3109 / JCM 10099 / NBRC 100826 / MSB8).